The chain runs to 258 residues: 6-phosphogluconolactonase (258 aa).

It belongs to the glucosamine/galactosamine-6-phosphate isomerase family. 6-phosphogluconolactonase subfamily.

The catalysed reaction is 6-phospho-D-glucono-1,5-lactone + H2O = 6-phospho-D-gluconate + H(+). Its pathway is carbohydrate degradation; pentose phosphate pathway; D-ribulose 5-phosphate from D-glucose 6-phosphate (oxidative stage): step 2/3. In terms of biological role, hydrolysis of 6-phosphogluconolactone to 6-phosphogluconate. The polypeptide is 6-phosphogluconolactonase (pgl) (Chlamydia pneumoniae (Chlamydophila pneumoniae)).